We begin with the raw amino-acid sequence, 134 residues long: ATP synthase epsilon chain (134 aa).

The protein belongs to the ATPase epsilon chain family. In terms of assembly, F-type ATPases have 2 components, CF(1) - the catalytic core - and CF(0) - the membrane proton channel. CF(1) has five subunits: alpha(3), beta(3), gamma(1), delta(1), epsilon(1). CF(0) has three main subunits: a, b and c.

The protein localises to the cell membrane. In terms of biological role, produces ATP from ADP in the presence of a proton gradient across the membrane. The sequence is that of ATP synthase epsilon chain from Ruminococcus albus (strain ATCC 27210 / DSM 20455 / JCM 14654 / NCDO 2250 / 7).